Reading from the N-terminus, the 156-residue chain is Small ribosomal subunit protein uS7 (156 aa).

This sequence belongs to the universal ribosomal protein uS7 family. As to quaternary structure, part of the 30S ribosomal subunit. Contacts proteins S9 and S11.

One of the primary rRNA binding proteins, it binds directly to 16S rRNA where it nucleates assembly of the head domain of the 30S subunit. Is located at the subunit interface close to the decoding center, probably blocks exit of the E-site tRNA. The protein is Small ribosomal subunit protein uS7 of Leuconostoc mesenteroides subsp. mesenteroides (strain ATCC 8293 / DSM 20343 / BCRC 11652 / CCM 1803 / JCM 6124 / NCDO 523 / NBRC 100496 / NCIMB 8023 / NCTC 12954 / NRRL B-1118 / 37Y).